A 421-amino-acid chain; its full sequence is MFMGLDGFEWWTGVVEDRTTDPLKLGRIKVRMIGLHPDKKSSEQGIRTEELLWVHPMQSLDNAAMNGIGNAPIGVVEGTWVFGFFRDKLRQDAVAMGVLPGIPEDLPNGSVGFNDPNEKYPLADKLNEPDTNRLARNDVDPDVYDESQSQTAFDNGEAPYVYRPHPIIASKRAAEEKEIPLAGYNAEGPKYDEKGTPYAAQYPYNHVRESESGHIHEIDDTEGAERLHTYHRTGTFEEIHPDGSRVTKIIGDDFEIVHKNQNVYIKGNLNITVVGDATFYCQQNVTQQIDGDLKQHVKGNVDQHVEMNVTQTVDKDVTQVVHQNVTQTVDMNVTQTVHQNVTQTVDGDVNQTVGGNVQSNVTGDYTQNISGNYTITVGGSMSESVSSSYTRSAASISDDGGGATLNLAGSAALDGTTVSLG.

Homotrimer. Interacts with gp27 trimer.

It localises to the virion. Tail-associated protein of the baseplate hub that is essential for viral DNA ejection. Involved in the tail assembly. In Vibrio parahaemolyticus (KVP40), this protein is Protein Gp5.